A 258-amino-acid polypeptide reads, in one-letter code: Tryptophan synthase alpha chain (258 aa).

Catalysis depends on proton acceptor residues Glu-52 and Asp-63.

The protein belongs to the TrpA family. In terms of assembly, tetramer of two alpha and two beta chains.

It carries out the reaction (1S,2R)-1-C-(indol-3-yl)glycerol 3-phosphate + L-serine = D-glyceraldehyde 3-phosphate + L-tryptophan + H2O. Its pathway is amino-acid biosynthesis; L-tryptophan biosynthesis; L-tryptophan from chorismate: step 5/5. Functionally, the alpha subunit is responsible for the aldol cleavage of indoleglycerol phosphate to indole and glyceraldehyde 3-phosphate. The sequence is that of Tryptophan synthase alpha chain from Streptococcus pneumoniae (strain ATCC 700669 / Spain 23F-1).